A 403-amino-acid chain; its full sequence is Acetate kinase (403 aa).

Asn-8 lines the Mg(2+) pocket. Lys-15 provides a ligand contact to ATP. Arg-90 contributes to the substrate binding site. Residue Asp-147 is the Proton donor/acceptor of the active site. Residues 207-211 (HLGSG), 282-284 (DLR), and 330-334 (GVGEN) contribute to the ATP site. Mg(2+) is bound at residue Glu-384.

The protein belongs to the acetokinase family. As to quaternary structure, homodimer. Requires Mg(2+) as cofactor. Mn(2+) is required as a cofactor.

The protein localises to the cytoplasm. It catalyses the reaction acetate + ATP = acetyl phosphate + ADP. Its pathway is metabolic intermediate biosynthesis; acetyl-CoA biosynthesis; acetyl-CoA from acetate: step 1/2. Functionally, catalyzes the formation of acetyl phosphate from acetate and ATP. Can also catalyze the reverse reaction. The chain is Acetate kinase from Exiguobacterium sibiricum (strain DSM 17290 / CCUG 55495 / CIP 109462 / JCM 13490 / 255-15).